The chain runs to 569 residues: Carboxylesterase 3 (569 aa).

The N-terminal stretch at 1–24 is a signal peptide; that stretch reads MRLHRLRARLNAVAFGLLLLLVHG. Cys95 and Cys122 form a disulfide bridge. Residue Asn103 is glycosylated (N-linked (GlcNAc...) asparagine). Residue Ser227 is the Acyl-ester intermediate of the active site. A disulfide bridge links Cys279 with Cys290. Residues Glu345 and His458 each act as charge relay system in the active site. The Prevents secretion from ER motif lies at 566 to 569; sequence QEDL.

It belongs to the type-B carboxylesterase/lipase family. Post-translationally, N-glycosylated.

Its subcellular location is the endoplasmic reticulum lumen. The enzyme catalyses a carboxylic ester + H2O = an alcohol + a carboxylate + H(+). In terms of biological role, involved in the detoxification of xenobiotics and in the activation of ester and amide prodrugs. The polypeptide is Carboxylesterase 3 (CES3) (Pongo abelii (Sumatran orangutan)).